Consider the following 291-residue polypeptide: tRNA dimethylallyltransferase (291 aa).

An ATP-binding site is contributed by 9–16 (GTTASGKT). 11–16 (TASGKT) lines the substrate pocket. Positions 34-37 (DSLC) are interaction with substrate tRNA.

Belongs to the IPP transferase family. As to quaternary structure, monomer. Mg(2+) serves as cofactor.

The enzyme catalyses adenosine(37) in tRNA + dimethylallyl diphosphate = N(6)-dimethylallyladenosine(37) in tRNA + diphosphate. Its function is as follows. Catalyzes the transfer of a dimethylallyl group onto the adenine at position 37 in tRNAs that read codons beginning with uridine, leading to the formation of N6-(dimethylallyl)adenosine (i(6)A). In Campylobacter lari (strain RM2100 / D67 / ATCC BAA-1060), this protein is tRNA dimethylallyltransferase.